Consider the following 191-residue polypeptide: Protein Ves (191 aa).

It belongs to the Ves family.

The sequence is that of Protein Ves from Escherichia coli (strain UTI89 / UPEC).